Reading from the N-terminus, the 535-residue chain is Probable bifunctional tRNA threonylcarbamoyladenosine biosynthesis protein (535 aa).

The interval 1–323 is kae1; the sequence is MICLGLEGTA…YRTDMVEVNW (323 aa). 3 residues coordinate Fe cation: H106, H110, and Y127. Residues 127 to 131, D159, G172, E176, and N256 each bind L-threonylcarbamoyladenylate; that span reads YVSGG. D284 is a Fe cation binding site. In terms of domain architecture, Protein kinase spans 333 to 535; sequence KIPEHLIGKG…DVERRARYVE (203 aa). Residues 339 to 347 and K360 each bind ATP; that span reads IGKGAEADI. Catalysis depends on D451, which acts as the Proton acceptor; for kinase activity.

This sequence in the N-terminal section; belongs to the KAE1 / TsaD family. In the C-terminal section; belongs to the protein kinase superfamily. Tyr protein kinase family. BUD32 subfamily. As to quaternary structure, component of the KEOPS complex that consists of Kae1, Bud32, Cgi121 and Pcc1; the whole complex dimerizes. The cofactor is Fe(2+).

The protein resides in the cytoplasm. The enzyme catalyses L-seryl-[protein] + ATP = O-phospho-L-seryl-[protein] + ADP + H(+). The catalysed reaction is L-threonyl-[protein] + ATP = O-phospho-L-threonyl-[protein] + ADP + H(+). It carries out the reaction L-threonylcarbamoyladenylate + adenosine(37) in tRNA = N(6)-L-threonylcarbamoyladenosine(37) in tRNA + AMP + H(+). With respect to regulation, activity provided by the Kae1 region seems to be regulated via phosphorylation by the protein kinase Bud32, which is itself activated by Cgi121. Functionally, required for the formation of a threonylcarbamoyl group on adenosine at position 37 (t(6)A37) in tRNAs that read codons beginning with adenine. Is a component of the KEOPS complex that is probably involved in the transfer of the threonylcarbamoyl moiety of threonylcarbamoyl-AMP (TC-AMP) to the N6 group of A37. The Kae1 domain likely plays a direct catalytic role in this reaction. The Bud32 domain probably displays kinase activity that regulates Kae1 function. In vitro, exhibits low ATPase activity, but does not bind DNA and does not have endonuclease activity. This is Probable bifunctional tRNA threonylcarbamoyladenosine biosynthesis protein from Methanocaldococcus jannaschii (strain ATCC 43067 / DSM 2661 / JAL-1 / JCM 10045 / NBRC 100440) (Methanococcus jannaschii).